Consider the following 304-residue polypeptide: Recombination-associated protein RdgC (304 aa).

This sequence belongs to the RdgC family.

It localises to the cytoplasm. Its subcellular location is the nucleoid. Functionally, may be involved in recombination. The polypeptide is Recombination-associated protein RdgC (Shewanella baltica (strain OS195)).